The chain runs to 179 residues: Large ribosomal subunit protein uL6 (179 aa).

The protein belongs to the universal ribosomal protein uL6 family. As to quaternary structure, part of the 50S ribosomal subunit.

Functionally, this protein binds to the 23S rRNA, and is important in its secondary structure. It is located near the subunit interface in the base of the L7/L12 stalk, and near the tRNA binding site of the peptidyltransferase center. This is Large ribosomal subunit protein uL6 from Solidesulfovibrio magneticus (strain ATCC 700980 / DSM 13731 / RS-1) (Desulfovibrio magneticus).